The following is a 440-amino-acid chain: Argininosuccinate lyase (440 aa).

This sequence belongs to the lyase 1 family. Argininosuccinate lyase subfamily.

The protein localises to the cytoplasm. The catalysed reaction is 2-(N(omega)-L-arginino)succinate = fumarate + L-arginine. It functions in the pathway amino-acid biosynthesis; L-arginine biosynthesis; L-arginine from L-ornithine and carbamoyl phosphate: step 3/3. This is Argininosuccinate lyase from Clostridium botulinum (strain Kyoto / Type A2).